Reading from the N-terminus, the 2108-residue chain is Mycocerosic acid synthase-like polyketide synthase (2108 aa).

An N-terminal signal peptide occupies residues 1–23 (MGKERTKTVDRTRVTPVAVIGMG). A lipid anchor (N-palmitoyl cysteine) is attached at Cys-24. Cys-24 is lipidated: S-diacylglycerol cysteine. Positions 24–436 (CRLPGGIDSP…GTNVHAIVEQ (413 aa)) constitute a Ketosynthase family 3 (KS3) domain. The active-site Acyl-thioester intermediate; for beta-ketoacyl synthase activity is Cys-185. Catalysis depends on for beta-ketoacyl synthase activity residues His-320 and His-356. A linker domain (LD) region spans residues 438-542 (PVPAPESGAP…PYPPAVGQDD (105 aa)). The segment at 543 to 842 (RGPVWVFSGQ…AAALAGMRRE (300 aa)) is acyltransferase (AT). Catalysis depends on Ser-634, which acts as the Acyl-ester intermediate; for acyltransferase activity. The dehydratase (DH) stretch occupies residues 900-1184 (NTVAVHPLLG…LAVRGLQLGT (285 aa)). Positions 905-1025 (HPLLGSHVRL…AVLHVVREAD (121 aa)) are N-terminal hotdog fold. Positions 905–1191 (HPLLGSHVRL…LGTGASQASE (287 aa)) constitute a PKS/mFAS DH domain. Residue His-938 is the Proton acceptor; for dehydratase activity of the active site. The interval 1044 to 1191 (PHKVDGAEVR…LGTGASQASE (148 aa)) is C-terminal hotdog fold. The Proton donor; for dehydratase activity role is filled by Asp-1108. Positions 1220–1391 (AWLLISTCDA…SGEDETAWRN (172 aa)) are pseudo beta-ketoacyl reductase (PsiKR). The interval 1419–1743 (AGMRLQIRTP…EHTGKLILDV (325 aa)) is enoylreductase (ER). The beta-ketoacyl reductase (KR) stretch occupies residues 1765-2004 (GSYIITGGLG…HSPFAEKFQS (240 aa)). NADP(+)-binding positions include 1773–1776 (LGGL), 1796–1799 (SRSQ), 1824–1825 (DI), and 1897–1898 (FS). Residues 2025–2101 (EEWPDRLRRL…DLMCDKLAAD (77 aa)) enclose the Carrier domain. Ser-2060 carries the O-(pantetheine 4'-phosphoryl)serine modification.

In terms of assembly, homodimer.

Its subcellular location is the cell membrane. Its pathway is lipid metabolism; fatty acid biosynthesis. Its function is as follows. Polyketide synthase likely involved in the biosynthesis of a polymethyl-branched fatty acid (PMB-FA) that might only be produced during host infection. Is required for the full virulence of M.tuberculosis during host infection. This is Mycocerosic acid synthase-like polyketide synthase from Mycobacterium tuberculosis (strain ATCC 25618 / H37Rv).